The sequence spans 250 residues: Probable phosphatase VIBHAR_04983 (250 aa).

Zn(2+) is bound by residues histidine 8, histidine 10, histidine 16, histidine 41, glutamate 74, histidine 102, histidine 132, aspartate 194, and histidine 196.

The protein belongs to the PHP family. It depends on Zn(2+) as a cofactor.

The sequence is that of Probable phosphatase VIBHAR_04983 from Vibrio campbellii (strain ATCC BAA-1116).